The chain runs to 433 residues: Serine--tRNA ligase (433 aa).

235-237 is a binding site for L-serine; sequence TSE. 266–268 serves as a coordination point for ATP; that stretch reads RSE. Position 289 (glutamate 289) interacts with L-serine. 353–356 serves as a coordination point for ATP; sequence EISS. Serine 388 is a binding site for L-serine.

This sequence belongs to the class-II aminoacyl-tRNA synthetase family. Type-1 seryl-tRNA synthetase subfamily. As to quaternary structure, homodimer. The tRNA molecule binds across the dimer.

Its subcellular location is the cytoplasm. It carries out the reaction tRNA(Ser) + L-serine + ATP = L-seryl-tRNA(Ser) + AMP + diphosphate + H(+). The enzyme catalyses tRNA(Sec) + L-serine + ATP = L-seryl-tRNA(Sec) + AMP + diphosphate + H(+). Its pathway is aminoacyl-tRNA biosynthesis; selenocysteinyl-tRNA(Sec) biosynthesis; L-seryl-tRNA(Sec) from L-serine and tRNA(Sec): step 1/1. Catalyzes the attachment of serine to tRNA(Ser). Is also able to aminoacylate tRNA(Sec) with serine, to form the misacylated tRNA L-seryl-tRNA(Sec), which will be further converted into selenocysteinyl-tRNA(Sec). The polypeptide is Serine--tRNA ligase (Burkholderia ambifaria (strain ATCC BAA-244 / DSM 16087 / CCUG 44356 / LMG 19182 / AMMD) (Burkholderia cepacia (strain AMMD))).